A 271-amino-acid polypeptide reads, in one-letter code: Short-chain dehydrogenase PC-15 (271 aa).

NADP(+) contacts are provided by I8, T34, K40, D56, N84, Y148, K152, V181, and T183. Y148 functions as the Proton acceptor in the catalytic mechanism. K152 functions as the Lowers pKa of active site Tyr in the catalytic mechanism.

The protein belongs to the short-chain dehydrogenases/reductases (SDR) family.

Its pathway is secondary metabolite biosynthesis. Its function is as follows. Short-chain dehydrogenase; part of the gene cluster that mediates the biosynthesis of the indole diterpenes penitrems. The geranylgeranyl diphosphate (GGPP) synthase penG catalyzes the first step in penitrem biosynthesis via conversion of farnesyl pyrophosphate and isopentyl pyrophosphate into geranylgeranyl pyrophosphate (GGPP). Condensation of indole-3-glycerol phosphate with GGPP by the prenyl transferase penC then forms 3-geranylgeranylindole (3-GGI). Epoxidation by the FAD-dependent monooxygenase penM leads to a epoxidized-GGI that is substrate of the terpene cyclase penB for cyclization to yield paspaline. Paspaline is subsequently converted to 13-desoxypaxilline by the cytochrome P450 monooxygenase penP, the latter being then converted to paxilline by the cytochrome P450 monooxygenase penQ. Paxilline is converted to beta-paxitriol via C-10 ketoreduction by the short-chain dehydrogenase PC-15 which can be monoprenylated at the C-20 by the indole diterpene prenyltransferase penD. A two-step elimination (acetylation and elimination) process performed by the O-acetyltransferase PC-16 and the P.simplicissimum ptmI-ortholog not yet identified in P.crustosum, leads to the production of the prenylated form of penijanthine. The FAD-linked oxidoreductase ptmO then converts the prenylated form of penijanthine into PC-M5 which is in turn transformed into PC-M4 by the aromatic dimethylallyltransferase PC-22. A series of oxidation steps involving 4 cytochrome P450 monooxygenases (PC-21, PC-05, PC-23, PC-20) and a FAD-dependent monooxygenase (PC-14) are required for the transformation of PC-M4 to penitrems A and E. Synthesis of these final products is proposed to proceed via penitrems D and C (PC-21, PC-05, PC-14) and penitrems B and F (PC-21, PC-05, PC-14, PC-23). In Penicillium crustosum (Blue mold fungus), this protein is Short-chain dehydrogenase PC-15.